We begin with the raw amino-acid sequence, 279 residues long: Movement protein (279 aa).

The tract at residues 247 to 279 (ESEELNVESPPAAIGSSSASRSEAFRPQVVNGL) is disordered. A compositionally biased stretch (low complexity) spans 254-268 (ESPPAAIGSSSASRS).

Belongs to the cucumovirus movement protein family.

It localises to the host cell junction. The protein resides in the host plasmodesma. Functionally, transports viral genome to neighboring plant cells directly through plasmosdesmata, without any budding. The movement protein allows efficient cell to cell propagation, by bypassing the host cell wall barrier. Acts by forming a tubular structure at the host plasmodesmata, enlarging it enough to allow free passage of virion capsids. The polypeptide is Movement protein (Cucumis sativus (Cucumber)).